Reading from the N-terminus, the 1342-residue chain is DNA-directed RNA polymerase subunit beta (1342 aa).

Belongs to the RNA polymerase beta chain family. The RNAP catalytic core consists of 2 alpha, 1 beta, 1 beta' and 1 omega subunit. When a sigma factor is associated with the core the holoenzyme is formed, which can initiate transcription.

The enzyme catalyses RNA(n) + a ribonucleoside 5'-triphosphate = RNA(n+1) + diphosphate. DNA-dependent RNA polymerase catalyzes the transcription of DNA into RNA using the four ribonucleoside triphosphates as substrates. The polypeptide is DNA-directed RNA polymerase subunit beta (Actinobacillus pleuropneumoniae serotype 5b (strain L20)).